Here is a 386-residue protein sequence, read N- to C-terminus: Succinate--CoA ligase [ADP-forming] subunit beta (386 aa).

Positions 9-244 constitute an ATP-grasp domain; it reads KAVLRSYGVS…LDEEDSKEIE (236 aa). ATP is bound by residues Lys-46, 53–55, Glu-99, Cys-102, and Glu-107; that span reads GRG. Residues Asn-199 and Asp-213 each coordinate Mg(2+). Substrate contacts are provided by residues Asn-264 and 321–323; that span reads GIM.

The protein belongs to the succinate/malate CoA ligase beta subunit family. Heterotetramer of two alpha and two beta subunits. Mg(2+) is required as a cofactor.

It catalyses the reaction succinate + ATP + CoA = succinyl-CoA + ADP + phosphate. The enzyme catalyses GTP + succinate + CoA = succinyl-CoA + GDP + phosphate. The protein operates within carbohydrate metabolism; tricarboxylic acid cycle; succinate from succinyl-CoA (ligase route): step 1/1. Functionally, succinyl-CoA synthetase functions in the citric acid cycle (TCA), coupling the hydrolysis of succinyl-CoA to the synthesis of either ATP or GTP and thus represents the only step of substrate-level phosphorylation in the TCA. The beta subunit provides nucleotide specificity of the enzyme and binds the substrate succinate, while the binding sites for coenzyme A and phosphate are found in the alpha subunit. The polypeptide is Succinate--CoA ligase [ADP-forming] subunit beta (Bacillus cereus (strain ATCC 14579 / DSM 31 / CCUG 7414 / JCM 2152 / NBRC 15305 / NCIMB 9373 / NCTC 2599 / NRRL B-3711)).